Here is a 169-residue protein sequence, read N- to C-terminus: MNATALLDTISIEQISQFLYSEARFLDDEQWDDWLECYAPQASFWMPAWDDNDQLTENPQTEISLIYYPDRQGLEDRVFRIKTERSSATMPDTRTAHNISNIEVESRDGLQITVRFNWNTLSFRYKNSYSYFGMSRYVIDFSGEQPKILSKYVMLKNDYINQVIDIYHI.

The protein belongs to the bacterial ring-hydroxylating dioxygenase beta subunit family. This dioxygenase system consists of three proteins: the two subunits of the hydroxylase (BenA and BenB), and an electron transfer component (BenC).

It carries out the reaction benzoate + NADH + O2 + H(+) = (1R,6S)-1,6-dihydroxycyclohexa-2,4-diene-1-carboxylate + NAD(+). It participates in aromatic compound metabolism; benzoate degradation via hydroxylation; catechol from benzoate: step 1/2. In terms of biological role, degradation of benzoate to 2-hydro-1,2-dihydroxybenzoate (DHB). The beta subunit may be responsible for the substrate specificity of the enzyme. The polypeptide is Benzoate 1,2-dioxygenase subunit beta (benB) (Acinetobacter baylyi (strain ATCC 33305 / BD413 / ADP1)).